A 230-amino-acid polypeptide reads, in one-letter code: 7-cyano-7-deazaguanine synthase (230 aa).

ATP is bound at residue 9–19 (LSGGLDSATTA). Zn(2+)-binding residues include Cys190, Cys198, Cys201, and Cys204.

This sequence belongs to the QueC family. It depends on Zn(2+) as a cofactor.

The enzyme catalyses 7-carboxy-7-deazaguanine + NH4(+) + ATP = 7-cyano-7-deazaguanine + ADP + phosphate + H2O + H(+). It functions in the pathway purine metabolism; 7-cyano-7-deazaguanine biosynthesis. Its function is as follows. Catalyzes the ATP-dependent conversion of 7-carboxy-7-deazaguanine (CDG) to 7-cyano-7-deazaguanine (preQ(0)). This chain is 7-cyano-7-deazaguanine synthase, found in Microcystis aeruginosa (strain NIES-843 / IAM M-2473).